The primary structure comprises 283 residues: Pantothenate synthetase (283 aa).

ATP is bound at residue 30 to 37 (MGCLHEGH). Catalysis depends on His-37, which acts as the Proton donor. Residue Gln-61 coordinates (R)-pantoate. Gln-61 provides a ligand contact to beta-alanine. 147–150 (GQKD) contributes to the ATP binding site. A (R)-pantoate-binding site is contributed by Gln-153. ATP contacts are provided by residues Val-176 and 184 to 187 (KSSR).

This sequence belongs to the pantothenate synthetase family. Homodimer.

It is found in the cytoplasm. It catalyses the reaction (R)-pantoate + beta-alanine + ATP = (R)-pantothenate + AMP + diphosphate + H(+). The protein operates within cofactor biosynthesis; (R)-pantothenate biosynthesis; (R)-pantothenate from (R)-pantoate and beta-alanine: step 1/1. Its function is as follows. Catalyzes the condensation of pantoate with beta-alanine in an ATP-dependent reaction via a pantoyl-adenylate intermediate. This chain is Pantothenate synthetase, found in Clostridium novyi (strain NT).